The chain runs to 191 residues: Inosine triphosphate pyrophosphatase (191 aa).

15–20 (TGNTNK) contacts ITP. Glu43 contributes to the Mg(2+) binding site. Residues Lys55, 71 to 72 (DT), Lys88, 147 to 150 (FGWD), Lys168, and 173 to 174 (HR) each bind ITP.

The protein belongs to the HAM1 NTPase family. In terms of assembly, homodimer. It depends on Mg(2+) as a cofactor. Requires Mn(2+) as cofactor.

It localises to the cytoplasm. The protein resides in the nucleus. It carries out the reaction ITP + H2O = IMP + diphosphate + H(+). It catalyses the reaction dITP + H2O = dIMP + diphosphate + H(+). The enzyme catalyses XTP + H2O = XMP + diphosphate + H(+). Functionally, pyrophosphatase that hydrolyzes non-canonical purine nucleotides such as inosine triphosphate (ITP), deoxyinosine triphosphate (dITP) or xanthosine 5'-triphosphate (XTP) to their respective monophosphate derivatives. The enzyme does not distinguish between the deoxy- and ribose forms. Probably excludes non-canonical purines from RNA and DNA precursor pools, thus preventing their incorporation into RNA and DNA and avoiding chromosomal lesions. The polypeptide is Inosine triphosphate pyrophosphatase (Chaetomium globosum (strain ATCC 6205 / CBS 148.51 / DSM 1962 / NBRC 6347 / NRRL 1970) (Soil fungus)).